The chain runs to 336 residues: uncharacterized protein (336 aa).

Residues K297–M316 show a composition bias toward basic and acidic residues. A disordered region spans residues K297–H336.

This is an uncharacterized protein from Invertebrate iridescent virus 6 (IIV-6).